Consider the following 711-residue polypeptide: MND1-interacting protein 1 (711 aa).

A coiled-coil region spans residues 390–648 (EWAQKNAMQA…LEGSYDNEAN (259 aa)). 2 disordered regions span residues 552–571 (EALA…EGHN) and 602–622 (RLKA…WKPK). Positions 602–611 (RLKASSDSDS) are enriched in basic and acidic residues. The RING-type zinc-finger motif lies at 653-697 (CIICMKDEVSVVFLPCAHQVVCGSCSDSFFASNNGGSKVTCPCCR).

In terms of assembly, interacts (via C-terminal domain) with MND1 and HOP2. Interacts with XRI1 (via C-terminal domain).

The polypeptide is MND1-interacting protein 1 (MIP1) (Arabidopsis thaliana (Mouse-ear cress)).